Here is a 417-residue protein sequence, read N- to C-terminus: Serine--tRNA ligase (417 aa).

232–234 (TAE) lines the L-serine pocket. ATP is bound by residues 263–265 (RRE) and Val-279. Glu-286 is an L-serine binding site. Residue 350 to 353 (EISS) coordinates ATP. Ser-385 contacts L-serine.

This sequence belongs to the class-II aminoacyl-tRNA synthetase family. Type-1 seryl-tRNA synthetase subfamily. In terms of assembly, homodimer. The tRNA molecule binds across the dimer.

It is found in the cytoplasm. The enzyme catalyses tRNA(Ser) + L-serine + ATP = L-seryl-tRNA(Ser) + AMP + diphosphate + H(+). It catalyses the reaction tRNA(Sec) + L-serine + ATP = L-seryl-tRNA(Sec) + AMP + diphosphate + H(+). It participates in aminoacyl-tRNA biosynthesis; selenocysteinyl-tRNA(Sec) biosynthesis; L-seryl-tRNA(Sec) from L-serine and tRNA(Sec): step 1/1. Catalyzes the attachment of serine to tRNA(Ser). Is also able to aminoacylate tRNA(Sec) with serine, to form the misacylated tRNA L-seryl-tRNA(Sec), which will be further converted into selenocysteinyl-tRNA(Sec). This chain is Serine--tRNA ligase, found in Leptospira borgpetersenii serovar Hardjo-bovis (strain JB197).